The following is a 364-amino-acid chain: MKFNEFLNNLSNYEPGKDIEVIAKEYGVKEVIKLASNENPFGTPPKAIECLRQNANKAHLYPDDSMIELKSTLAQKYKVQNENIIIGAGSDQVIEFAIHSKLNSKNAFLQAGVTFAMYEIYAKQCGAKCYKTQSITHNLDEFKKLYETHKDEIKLIFLCLPNNPLGECLDASEATEFIKGVNEDCLVVIDAAYNEFASFKDSKKHLEPCELIKEFDNVLYLGTFSKLYGLGGLRIGYGIANANIISAFYKLRAPFNVSNLALKAAVAAMDDDEFTEKTLENNFSQMELYKEFAKKHNIKIIDSYTNFITYFFDEKNSTDLSEKLLKKGIIIRNLKSYGLNAIRITIGTSYENEKFFTEFDKILR.

An N6-(pyridoxal phosphate)lysine modification is found at lysine 226.

Belongs to the class-II pyridoxal-phosphate-dependent aminotransferase family. Histidinol-phosphate aminotransferase subfamily. As to quaternary structure, homodimer. The cofactor is pyridoxal 5'-phosphate.

The catalysed reaction is L-histidinol phosphate + 2-oxoglutarate = 3-(imidazol-4-yl)-2-oxopropyl phosphate + L-glutamate. Its pathway is amino-acid biosynthesis; L-histidine biosynthesis; L-histidine from 5-phospho-alpha-D-ribose 1-diphosphate: step 7/9. This is Histidinol-phosphate aminotransferase from Campylobacter jejuni subsp. jejuni serotype O:2 (strain ATCC 700819 / NCTC 11168).